The following is a 123-amino-acid chain: UPF0102 protein Pput_4400 (123 aa).

This sequence belongs to the UPF0102 family.

The polypeptide is UPF0102 protein Pput_4400 (Pseudomonas putida (strain ATCC 700007 / DSM 6899 / JCM 31910 / BCRC 17059 / LMG 24140 / F1)).